The following is an 86-amino-acid chain: MIOREX complex component 7 (86 aa).

As to quaternary structure, associates with the mitochondrial ribosome.

It localises to the mitochondrion. Component of MIOREX complexes, large expressome-like assemblies of ribosomes with factors involved in all the steps of post-transcriptional gene expression. The protein is MIOREX complex component 7 of Saccharomyces cerevisiae (strain ATCC 204508 / S288c) (Baker's yeast).